Consider the following 238-residue polypeptide: 2-C-methyl-D-erythritol 4-phosphate cytidylyltransferase (238 aa).

Belongs to the IspD/TarI cytidylyltransferase family. IspD subfamily.

It carries out the reaction 2-C-methyl-D-erythritol 4-phosphate + CTP + H(+) = 4-CDP-2-C-methyl-D-erythritol + diphosphate. It functions in the pathway isoprenoid biosynthesis; isopentenyl diphosphate biosynthesis via DXP pathway; isopentenyl diphosphate from 1-deoxy-D-xylulose 5-phosphate: step 2/6. Functionally, catalyzes the formation of 4-diphosphocytidyl-2-C-methyl-D-erythritol from CTP and 2-C-methyl-D-erythritol 4-phosphate (MEP). The chain is 2-C-methyl-D-erythritol 4-phosphate cytidylyltransferase from Pelotomaculum thermopropionicum (strain DSM 13744 / JCM 10971 / SI).